We begin with the raw amino-acid sequence, 414 residues long: MAMVVSTWRDPQDEVPGSQGSQASQAPPVPGPPPGAPHTPQTPGQGGPASTPAQTAAGGQGGPGGPGSDKQQQQQHIECVVCGDKSSGKHYGQFTCEGCKSFFKRSVRRNLSYTCRANRNCPIDQHHRNQCQYCRLKKCLKVGMRREAVQRGRMPPTQPSHGQFALTNGDPLNCHSYLSGYISLLLRAEPYPTSRFGSQCMQPNNIMGIENICELAARMLFSAVEWARNIPFFPDLQITDQVALLRLTWSELFVLNAAQCSMPLHVAPLLAAAGLHASPMSADRVVAFMDHIRIFQEQVEKLKALHVDSAEYSCLKAIVLFTSDACGLSDVAHVESLQEKSQCALEEYVRSQYPNQPTRFGKLLLRLPSLRTVSSSVIEQLFFVRLVGKTPIETLIRDMLLSGSSFNWPYMAIQ.

Residues 1–72 are disordered; it reads MAMVVSTWRD…PGGPGSDKQQ (72 aa). Pro residues predominate over residues 27–37; the sequence is PPVPGPPPGAP. Over residues 38-57 the composition is skewed to low complexity; it reads HTPQTPGQGGPASTPAQTAA. The residue at position 51 (Thr51) is a Phosphothreonine. Positions 58–67 are enriched in gly residues; the sequence is GGQGGPGGPG. The segment at residues 76-151 is a DNA-binding region (nuclear receptor); sequence HIECVVCGDK…VGMRREAVQR (76 aa). NR C4-type zinc fingers lie at residues 79 to 99 and 115 to 139; these read CVVCGDKSSGKHYGQFTCEGC and CRANRNCPIDQHHRNQCQYCRLKKC. Residues 117–414 are interaction with ZFPM2; sequence ANRNCPIDQH…SFNWPYMAIQ (298 aa). The NR LBD domain occupies 177–403; sequence YLSGYISLLL…TLIRDMLLSG (227 aa). An important for dimerization region spans residues 337–414; it reads LQEKSQCALE…SFNWPYMAIQ (78 aa).

It belongs to the nuclear hormone receptor family. NR2 subfamily. Interacts with SQSTM1. Binds DNA as a dimer; homodimer or heterodimer with NR2F6. Interacts with NCOA1, NCOA2, NCOA3 and PPARGC1A. Interacts with ZFPM2.

It localises to the nucleus. Ligand-activated transcription factor. Activated by high concentrations of 9-cis-retinoic acid and all-trans-retinoic acid, but not by dexamethasone, cortisol or progesterone (in vitro). Regulation of the apolipoprotein A-I gene transcription. Binds to DNA site A. May be required to establish ovary identity during early gonad development. This is COUP transcription factor 2 (NR2F2) from Bos taurus (Bovine).